The sequence spans 311 residues: Malate dehydrogenase (311 aa).

Residues 7 to 13 (GAAGGIG) and Asp34 each bind NAD(+). Residues Arg81 and Arg87 each coordinate substrate. NAD(+) is bound by residues Asn94 and 117-119 (ITN). Positions 119 and 153 each coordinate substrate. His177 functions as the Proton acceptor in the catalytic mechanism. Met227 lines the NAD(+) pocket.

Belongs to the LDH/MDH superfamily. MDH type 1 family. In terms of assembly, homodimer.

It carries out the reaction (S)-malate + NAD(+) = oxaloacetate + NADH + H(+). Its function is as follows. Catalyzes the reversible oxidation of malate to oxaloacetate. The sequence is that of Malate dehydrogenase from Yersinia enterocolitica serotype O:8 / biotype 1B (strain NCTC 13174 / 8081).